Reading from the N-terminus, the 140-residue chain is Putative esterase SSO2140 (140 aa).

Belongs to the thioesterase PaaI family.

This Saccharolobus solfataricus (strain ATCC 35092 / DSM 1617 / JCM 11322 / P2) (Sulfolobus solfataricus) protein is Putative esterase SSO2140.